Reading from the N-terminus, the 571-residue chain is Gag-Pro polyprotein (571 aa).

Residue Gly2 is the site of N-myristoyl glycine; by host attachment. A PPXY motif motif is present at residues 100-103; the sequence is PPPY. Repeats lie at residues 342 to 362 and 367 to 387; these read PPPGPCYRCLKEGHWARDCPT and PPPGPCPICKDPSHWKRDCPT. 2 consecutive CCHC-type zinc fingers follow at residues 345–362 and 370–387; these read GPCYRCLKEGHWARDCPT and GPCPICKDPSHWKRDCPT. Residues 447 to 525 form the Peptidase A2 domain; that stretch reads ALMLVDTGAE…DKWQILGRDV (79 aa). Asp452 functions as the Protease; shared with dimeric partner in the catalytic mechanism.

Homodimer; the homodimers are part of the immature particles. Interacts with human TSG101 and NEDD4; these interactions are essential for budding and release of viral particles. As to quaternary structure, homodimer; further assembles as homohexamers. Post-translationally, specific enzymatic cleavages by the viral protease yield mature proteins. The polyprotein is cleaved during and after budding, this process is termed maturation. The protease is autoproteolytically processed at its N- and C-termini. In terms of processing, gag polyprotein: Myristoylated. Myristoylation of the matrix (MA) domain mediates the transport and binding of Gag polyproteins to the host plasma membrane and is required for the assembly of viral particles.

It localises to the virion. In terms of biological role, the matrix domain targets Gag, Gag-Pro and Gag-Pro-Pol polyproteins to the plasma membrane via a multipartite membrane binding signal, that includes its myristoylated N-terminus. Matrix protein. Functionally, forms the spherical core of the virus that encapsulates the genomic RNA-nucleocapsid complex. Its function is as follows. Binds strongly to viral nucleic acids and promote their aggregation. Also destabilizes the nucleic acids duplexes via highly structured zinc-binding motifs. In terms of biological role, the aspartyl protease mediates proteolytic cleavages of Gag and Gag-Pol polyproteins during or shortly after the release of the virion from the plasma membrane. Cleavages take place as an ordered, step-wise cascade to yield mature proteins. This process is called maturation. Displays maximal activity during the budding process just prior to particle release from the cell. This chain is Gag-Pro polyprotein, found in Bos taurus (Bovine).